The following is a 349-amino-acid chain: Peroxidase C3 (349 aa).

A signal peptide spans methionine 1–alanine 29. Cystine bridges form between cysteine 40–cysteine 120, cysteine 73–cysteine 78, cysteine 126–cysteine 329, and cysteine 206–cysteine 238. The Proton acceptor role is filled by histidine 71. Positions 72, 75, 77, 79, and 81 each coordinate Ca(2+). Residue asparagine 86 is glycosylated (N-linked (GlcNAc...) asparagine). Proline 168 is a binding site for substrate. Histidine 199 serves as a coordination point for heme b. Threonine 200 provides a ligand contact to Ca(2+). Asparagine 217 and asparagine 243 each carry an N-linked (GlcNAc...) asparagine glycan. 3 residues coordinate Ca(2+): aspartate 251, threonine 254, and aspartate 259.

The protein belongs to the peroxidase family. Classical plant (class III) peroxidase subfamily. Requires Ca(2+) as cofactor. It depends on heme b as a cofactor.

It is found in the secreted. The protein resides in the vacuole. The catalysed reaction is 2 a phenolic donor + H2O2 = 2 a phenolic radical donor + 2 H2O. In terms of biological role, removal of H(2)O(2), oxidation of toxic reductants, biosynthesis and degradation of lignin, suberization, auxin catabolism, response to environmental stresses such as wounding, pathogen attack and oxidative stress. These functions might be dependent on each isozyme/isoform in each plant tissue. In Armoracia rusticana (Horseradish), this protein is Peroxidase C3 (PRXC3).